A 335-amino-acid chain; its full sequence is HTH-type transcriptional regulator MalR (335 aa).

The HTH lacI-type domain maps to 1–55 (MNIKDIARLSGVGVSTVSRVINNHPDVKQSTREKVLQIIKDSNYIPNNSARILKQ). A DNA-binding region (H-T-H motif) is located at residues 3 to 22 (IKDIARLSGVGVSTVSRVIN).

Its function is as follows. Repressor of glucanotransferase gene expression. This is HTH-type transcriptional regulator MalR from Clostridium butyricum.